We begin with the raw amino-acid sequence, 335 residues long: MMRIAVDAMGGDHAPAEIVKGALRSIEQFDIEVILVGQPERIKEFLPQGEVPARVRIKEATEVVEMDEHPAQAVRRKKDSSIVVATRLVKEGEADALVSAGSTGAQMAASLLGLGRIKGIDRPAIVTVLPTLEGGKLLLDVGANPDAKPEHLVQYAMMGSIYAESILGIQNPKVGLLNIGTEETKGNELTQATYPLLQKAPLNFIGNVEGRAIPYGQAADVVVCEGFVGNVVLKTTEGLAGALFQLIKEKITATPLRKLGALAIKPGLKEIAKMMDYAEYGGAPLLGVHGISIISHGSSNEKAIFNAIRVAKECVESGFIEEIKKELPRFTAAQE.

Belongs to the PlsX family. As to quaternary structure, homodimer. Probably interacts with PlsY.

It is found in the cytoplasm. It carries out the reaction a fatty acyl-[ACP] + phosphate = an acyl phosphate + holo-[ACP]. The protein operates within lipid metabolism; phospholipid metabolism. Catalyzes the reversible formation of acyl-phosphate (acyl-PO(4)) from acyl-[acyl-carrier-protein] (acyl-ACP). This enzyme utilizes acyl-ACP as fatty acyl donor, but not acyl-CoA. This is Phosphate acyltransferase from Desulfitobacterium hafniense (strain Y51).